The chain runs to 1013 residues: Mediator of RNA polymerase II transcription subunit 5 (1013 aa).

The protein belongs to the Mediator complex subunit 5 family. As to quaternary structure, component of the Mediator complex.

It is found in the nucleus. Its function is as follows. Component of the Mediator complex, a coactivator involved in the regulated transcription of nearly all RNA polymerase II-dependent genes. Mediator functions as a bridge to convey information from gene-specific regulatory proteins to the basal RNA polymerase II transcription machinery. Mediator is recruited to promoters by direct interactions with regulatory proteins and serves as a scaffold for the assembly of a functional preinitiation complex with RNA polymerase II and the general transcription factors. The protein is Mediator of RNA polymerase II transcription subunit 5 (NUT1) of Aspergillus oryzae (strain ATCC 42149 / RIB 40) (Yellow koji mold).